The primary structure comprises 189 residues: Peptidyl-tRNA hydrolase (189 aa).

TRNA is bound at residue Tyr14. His19 (proton acceptor) is an active-site residue. Positions 64, 66, and 112 each coordinate tRNA.

The protein belongs to the PTH family. As to quaternary structure, monomer.

It localises to the cytoplasm. The enzyme catalyses an N-acyl-L-alpha-aminoacyl-tRNA + H2O = an N-acyl-L-amino acid + a tRNA + H(+). Hydrolyzes ribosome-free peptidyl-tRNAs (with 1 or more amino acids incorporated), which drop off the ribosome during protein synthesis, or as a result of ribosome stalling. Functionally, catalyzes the release of premature peptidyl moieties from peptidyl-tRNA molecules trapped in stalled 50S ribosomal subunits, and thus maintains levels of free tRNAs and 50S ribosomes. The chain is Peptidyl-tRNA hydrolase from Clostridium botulinum (strain Kyoto / Type A2).